The chain runs to 395 residues: Putative 8-amino-7-oxononanoate synthase (395 aa).

Arg23 lines the substrate pocket. Position 110-111 (110-111 (GF)) interacts with pyridoxal 5'-phosphate. His135 serves as a coordination point for substrate. Residues Ser182, 207–210 (DEAH), and 239–242 (TFSK) contribute to the pyridoxal 5'-phosphate site. Lys242 carries the N6-(pyridoxal phosphate)lysine modification. Thr356 contributes to the substrate binding site.

This sequence belongs to the class-II pyridoxal-phosphate-dependent aminotransferase family. BioF subfamily. Homodimer. Requires pyridoxal 5'-phosphate as cofactor.

The enzyme catalyses 6-carboxyhexanoyl-[ACP] + L-alanine + H(+) = (8S)-8-amino-7-oxononanoate + holo-[ACP] + CO2. Its pathway is cofactor biosynthesis; biotin biosynthesis. In terms of biological role, catalyzes the decarboxylative condensation of pimeloyl-[acyl-carrier protein] and L-alanine to produce 8-amino-7-oxononanoate (AON), [acyl-carrier protein], and carbon dioxide. This is Putative 8-amino-7-oxononanoate synthase (bioF) from Bacillus anthracis.